We begin with the raw amino-acid sequence, 139 residues long: Probable transcription termination protein NusA (139 aa).

The KH domain maps to 31–97 (DDRVVYVVTA…YNVTVSENDT (67 aa)).

Belongs to the NusA family.

It localises to the cytoplasm. In terms of biological role, participates in transcription termination. This chain is Probable transcription termination protein NusA, found in Halobacterium salinarum (strain ATCC 29341 / DSM 671 / R1).